An 84-amino-acid polypeptide reads, in one-letter code: Small ribosomal subunit protein bS18 (84 aa).

Belongs to the bacterial ribosomal protein bS18 family. Part of the 30S ribosomal subunit. Forms a tight heterodimer with protein bS6.

Functionally, binds as a heterodimer with protein bS6 to the central domain of the 16S rRNA, where it helps stabilize the platform of the 30S subunit. The chain is Small ribosomal subunit protein bS18 from Maricaulis maris (strain MCS10) (Caulobacter maris).